The chain runs to 625 residues: Mesothelin (625 aa).

The N-terminal stretch at M1–L35 is a signal peptide. The N-linked (GlcNAc...) asparagine glycan is linked to N93. S202 carries the post-translational modification Phosphoserine. Cysteines 304 and 328 form a disulfide. N390, N488, and N517 each carry an N-linked (GlcNAc...) asparagine glycan. A lipid anchor (GPI-anchor amidated serine) is attached at S600. The propeptide at S601 to S625 is removed in mature form.

Belongs to the mesothelin family. Interacts with MUC16. In terms of processing, proteolytically cleaved by a furin-like convertase to generate megakaryocyte-potentiating factor (MPF), and the cleaved form of mesothelin. Highly expressed in lung and heart. Expressed at low levels in spleen, liver, kidney and testis. Present in lung (at protein level).

It is found in the cell membrane. The protein localises to the golgi apparatus. Its subcellular location is the secreted. Membrane-anchored forms may play a role in cellular adhesion. In terms of biological role, megakaryocyte-potentiating factor (MPF) may potentiate megakaryocyte colony formation. In Mus musculus (Mouse), this protein is Mesothelin (Msln).